We begin with the raw amino-acid sequence, 368 residues long: Ankyrin repeat domain-containing protein 40 (368 aa).

M1 is subject to N-acetylmethionine. ANK repeat units lie at residues E9–S38 and N43–I72. 3 disordered regions span residues M93 to S115, D139 to P176, and I196 to Y238. Positions V95–N107 are enriched in acidic residues. Positions S149–P169 are enriched in pro residues. A compositionally biased stretch (polar residues) spans P212–P224.

This chain is Ankyrin repeat domain-containing protein 40 (ANKRD40), found in Homo sapiens (Human).